The chain runs to 104 residues: UPF0145 protein RD1_2695 (104 aa).

It belongs to the UPF0145 family.

The sequence is that of UPF0145 protein RD1_2695 from Roseobacter denitrificans (strain ATCC 33942 / OCh 114) (Erythrobacter sp. (strain OCh 114)).